The sequence spans 880 residues: Alanine--tRNA ligase (880 aa).

H568, H572, C670, and H674 together coordinate Zn(2+).

This sequence belongs to the class-II aminoacyl-tRNA synthetase family. Zn(2+) is required as a cofactor.

It is found in the cytoplasm. It carries out the reaction tRNA(Ala) + L-alanine + ATP = L-alanyl-tRNA(Ala) + AMP + diphosphate. Functionally, catalyzes the attachment of alanine to tRNA(Ala) in a two-step reaction: alanine is first activated by ATP to form Ala-AMP and then transferred to the acceptor end of tRNA(Ala). Also edits incorrectly charged Ser-tRNA(Ala) and Gly-tRNA(Ala) via its editing domain. The chain is Alanine--tRNA ligase from Ligilactobacillus salivarius (strain UCC118) (Lactobacillus salivarius).